The primary structure comprises 422 residues: Serine hydroxymethyltransferase (422 aa).

120–122 (GHI) serves as a coordination point for (6S)-5,6,7,8-tetrahydrofolate. At lysine 226 the chain carries N6-(pyridoxal phosphate)lysine. A (6S)-5,6,7,8-tetrahydrofolate-binding site is contributed by glutamate 241.

Belongs to the SHMT family. Homodimer. The cofactor is pyridoxal 5'-phosphate.

The protein localises to the cytoplasm. It catalyses the reaction 5,10-methylenetetrahydromethanopterin + glycine + H2O = 5,6,7,8-tetrahydromethanopterin + L-serine. It participates in amino-acid biosynthesis; glycine biosynthesis; glycine from L-serine: step 1/1. Catalyzes the reversible interconversion of serine and glycine with tetrahydromethanopterin (H4MPT) serving as the one-carbon carrier. Also exhibits a pteridine-independent aldolase activity toward beta-hydroxyamino acids, producing glycine and aldehydes, via a retro-aldol mechanism. The polypeptide is Serine hydroxymethyltransferase (Methanosphaera stadtmanae (strain ATCC 43021 / DSM 3091 / JCM 11832 / MCB-3)).